Consider the following 156-residue polypeptide: 3-hydroxyacyl-[acyl-carrier-protein] dehydratase FabZ (156 aa).

The active site involves His62.

It belongs to the thioester dehydratase family. FabZ subfamily.

The protein resides in the cytoplasm. The enzyme catalyses a (3R)-hydroxyacyl-[ACP] = a (2E)-enoyl-[ACP] + H2O. Its function is as follows. Involved in unsaturated fatty acids biosynthesis. Catalyzes the dehydration of short chain beta-hydroxyacyl-ACPs and long chain saturated and unsaturated beta-hydroxyacyl-ACPs. This chain is 3-hydroxyacyl-[acyl-carrier-protein] dehydratase FabZ, found in Parasynechococcus marenigrum (strain WH8102).